The chain runs to 387 residues: Ferrochelatase (387 aa).

Residues His-196 and Glu-277 each coordinate Fe cation.

This sequence belongs to the ferrochelatase family.

The protein localises to the cytoplasm. The catalysed reaction is heme b + 2 H(+) = protoporphyrin IX + Fe(2+). Its pathway is porphyrin-containing compound metabolism; protoheme biosynthesis; protoheme from protoporphyrin-IX: step 1/1. Catalyzes the ferrous insertion into protoporphyrin IX. The chain is Ferrochelatase from Trichodesmium erythraeum (strain IMS101).